We begin with the raw amino-acid sequence, 1017 residues long: Stereoselective keto-reductase af490 (1017 aa).

Positions 6-138 (NELSGSQVPG…GRLRMTFAGH (133 aa)) are N-terminal hotdog fold. The 306-residue stretch at 6 to 311 (NELSGSQVPG…MSPIAPSTEK (306 aa)) folds into the PKS/mFAS DH domain. Residues 8–306 (LSGSQVPGAT…LEGLTMSPIA (299 aa)) are dehydratase (DH). The tract at residues 153-311 (LRPVSISPFY…MSPIAPSTEK (159 aa)) is C-terminal hotdog fold. The tract at residues 532-720 (QIRFLRAPFD…VQGGRLLIPR (189 aa)) is ketoreductase (KR).

The catalysed reaction is fumagillol + NADP(+) = 5-dehydrofumagillol + NADPH + H(+). It participates in secondary metabolite biosynthesis; terpenoid biosynthesis. Functionally, stereoselective keto-reductase; part of the gene cluster that mediates the biosynthesis of fumagillin, a meroterpenoid that has numerous biological activities including irreversible inhibition of human type 2 methionine aminopeptidase (METAP2). Within the pathway, the keto-reductase af490 acts as a 5-dehydrofumagillol 5-reductase that stereoselectively reduces 5-keto-fumagillol to 5R-hydroxy-seco-sesquiterpene. The pathway begins with the conversion of farnesyl pyrophosphate (FPP) to beta-trans-bergamotene by the membrane-bound beta-trans-bergamotene synthase af520. The multifunctional cytochrome P450 monooxygenase af510 then converts beta-trans-bergamotene into 5-keto-demethoxyfumagillol via several oxydation steps. 5-keto-demethoxyfumagillol is then subjected to successive C-6 hydroxylation and O-methylation by the dioxygenase af480 and O-methyltransferase af390-400, respectively, to yield 5-keto-fumagillol, which is then stereoselectively reduced by the keto-reductase af490 to 5R-hydroxy-seco-sesquiterpene. The next step is the polyketide transferase af380-catalyzed transfer of a dodecapentaenoyl group synthesized by the polyketide synthase af370 onto 5R-hydroxy-seco-sesquiterpene which leads to the production of prefumagillin. Finally, oxidative cleavage by the monooxygenase af470 converts prefumagillin to fumagillin. This is Stereoselective keto-reductase af490 from Aspergillus fumigatus (strain ATCC MYA-4609 / CBS 101355 / FGSC A1100 / Af293) (Neosartorya fumigata).